We begin with the raw amino-acid sequence, 205 residues long: UPF0316 protein Cthe_2213 (205 aa).

3 consecutive transmembrane segments (helical) span residues 15 to 37 (LPLLIFFSRIIDVTIGTIRIIFV), 44 to 64 (LAPVLGFFEVLVWIMAISQIM), and 70 to 90 (FVCYFAYAAGFATGTFVGIII).

The protein belongs to the UPF0316 family.

Its subcellular location is the cell membrane. The protein is UPF0316 protein Cthe_2213 of Acetivibrio thermocellus (strain ATCC 27405 / DSM 1237 / JCM 9322 / NBRC 103400 / NCIMB 10682 / NRRL B-4536 / VPI 7372) (Clostridium thermocellum).